A 119-amino-acid chain; its full sequence is NAD(P)H-quinone oxidoreductase subunit M (119 aa).

It belongs to the complex I NdhM subunit family. NDH-1 can be composed of about 15 different subunits; different subcomplexes with different compositions have been identified which probably have different functions.

The protein resides in the cell inner membrane. The catalysed reaction is a plastoquinone + NADH + (n+1) H(+)(in) = a plastoquinol + NAD(+) + n H(+)(out). The enzyme catalyses a plastoquinone + NADPH + (n+1) H(+)(in) = a plastoquinol + NADP(+) + n H(+)(out). Its function is as follows. NDH-1 shuttles electrons from an unknown electron donor, via FMN and iron-sulfur (Fe-S) centers, to quinones in the respiratory and/or the photosynthetic chain. The immediate electron acceptor for the enzyme in this species is believed to be plastoquinone. Couples the redox reaction to proton translocation, and thus conserves the redox energy in a proton gradient. Cyanobacterial NDH-1 also plays a role in inorganic carbon-concentration. The chain is NAD(P)H-quinone oxidoreductase subunit M from Gloeobacter violaceus (strain ATCC 29082 / PCC 7421).